A 232-amino-acid polypeptide reads, in one-letter code: Methylthioribulose-1-phosphate dehydratase (232 aa).

C91 provides a ligand contact to substrate. Residues H109, H111, and H191 each contribute to the Zn(2+) site.

Belongs to the aldolase class II family. MtnB subfamily. It depends on Zn(2+) as a cofactor.

Its subcellular location is the cytoplasm. The catalysed reaction is 5-(methylsulfanyl)-D-ribulose 1-phosphate = 5-methylsulfanyl-2,3-dioxopentyl phosphate + H2O. The protein operates within amino-acid biosynthesis; L-methionine biosynthesis via salvage pathway; L-methionine from S-methyl-5-thio-alpha-D-ribose 1-phosphate: step 2/6. Functionally, catalyzes the dehydration of methylthioribulose-1-phosphate (MTRu-1-P) into 2,3-diketo-5-methylthiopentyl-1-phosphate (DK-MTP-1-P). This Schizosaccharomyces japonicus (strain yFS275 / FY16936) (Fission yeast) protein is Methylthioribulose-1-phosphate dehydratase.